A 112-amino-acid polypeptide reads, in one-letter code: UPF0060 membrane protein IL2332 (112 aa).

A run of 4 helical transmembrane segments spans residues 10 to 30 (LGLFFITAIAEIIGCYLPYLW), 36 to 56 (SAWLLIPAAISLAVFAWLLTL), 64 to 84 (VYAAYGGVYVVTALLWLKAVE), and 90 to 110 (TYDAVGAAFTLTGMAIIAVGW).

This sequence belongs to the UPF0060 family.

The protein localises to the cell inner membrane. This Idiomarina loihiensis (strain ATCC BAA-735 / DSM 15497 / L2-TR) protein is UPF0060 membrane protein IL2332.